We begin with the raw amino-acid sequence, 139 residues long: Holo-[acyl-carrier-protein] synthase (139 aa).

D8 and E61 together coordinate Mg(2+).

The protein belongs to the P-Pant transferase superfamily. AcpS family. Mg(2+) is required as a cofactor.

The protein localises to the cytoplasm. The enzyme catalyses apo-[ACP] + CoA = holo-[ACP] + adenosine 3',5'-bisphosphate + H(+). Functionally, transfers the 4'-phosphopantetheine moiety from coenzyme A to a Ser of acyl-carrier-protein. In Nitrobacter hamburgensis (strain DSM 10229 / NCIMB 13809 / X14), this protein is Holo-[acyl-carrier-protein] synthase.